Here is a 241-residue protein sequence, read N- to C-terminus: Antimicrobial ginkbilobin-2-like protein (241 aa).

Positions 1–23 are cleaved as a signal peptide; the sequence is MLSSKYISVSFLLLSLSLHAVNC. 2 Gnk2-homologous domains span residues 25-127 and 133-238; these read DPLY…NIDF and NKNK…LYPF. 4 disulfide bridges follow: C81–C90, C93–C118, C192–C201, and C204–C229. N-linked (GlcNAc...) asparagine glycosylation is present at N89.

Belongs to the cysteine-rich repeat secretory protein family.

Its subcellular location is the secreted. Possesses antimicrobial activity toward the oomycete Phytophthora cinnamomi (ink disease agent), thus reducing its growth rate and confering an increased resistance to the plant. The protein is Antimicrobial ginkbilobin-2-like protein of Castanea crenata (Japanese chestnut).